The following is a 218-amino-acid chain: Guanylate kinase (218 aa).

Positions 14–193 (GLMLVLSSPS…AFAEVRGIVV (180 aa)) constitute a Guanylate kinase-like domain. Position 21–28 (21–28 (SPSGAGKS)) interacts with ATP.

It belongs to the guanylate kinase family.

The protein resides in the cytoplasm. The enzyme catalyses GMP + ATP = GDP + ADP. Its function is as follows. Essential for recycling GMP and indirectly, cGMP. The polypeptide is Guanylate kinase (gmk) (Mesorhizobium japonicum (strain LMG 29417 / CECT 9101 / MAFF 303099) (Mesorhizobium loti (strain MAFF 303099))).